Here is a 30-residue protein sequence, read N- to C-terminus: Trypsin inhibitor 3 (30 aa).

Pyrrolidone carboxylic acid is present on Q1. Cystine bridges form between C4–C21, C11–C23, and C17–C29.

It localises to the secreted. Functionally, inhibits trypsin; probably participates in a plant defense mechanism. The protein is Trypsin inhibitor 3 of Momordica cochinchinensis (Spiny bitter cucumber).